We begin with the raw amino-acid sequence, 602 residues long: Aspartate--tRNA(Asp/Asn) ligase (602 aa).

E191 is an L-aspartate binding site. Residues Q215–K218 form an aspartate region. R237 lines the L-aspartate pocket. Residues R237–E239 and Q246 each bind ATP. L-aspartate is bound at residue H465. Residue E499 participates in ATP binding. An L-aspartate-binding site is contributed by R506. G551–R554 contributes to the ATP binding site.

It belongs to the class-II aminoacyl-tRNA synthetase family. Type 1 subfamily. Homodimer.

The protein resides in the cytoplasm. The enzyme catalyses tRNA(Asx) + L-aspartate + ATP = L-aspartyl-tRNA(Asx) + AMP + diphosphate. Its function is as follows. Aspartyl-tRNA synthetase with relaxed tRNA specificity since it is able to aspartylate not only its cognate tRNA(Asp) but also tRNA(Asn). Reaction proceeds in two steps: L-aspartate is first activated by ATP to form Asp-AMP and then transferred to the acceptor end of tRNA(Asp/Asn). The protein is Aspartate--tRNA(Asp/Asn) ligase of Treponema pallidum (strain Nichols).